Consider the following 362-residue polypeptide: UDP-N-acetylglucosamine--N-acetylmuramyl-(pentapeptide) pyrophosphoryl-undecaprenol N-acetylglucosamine transferase (362 aa).

UDP-N-acetyl-alpha-D-glucosamine-binding positions include 15 to 17 (TGG), Asn-127, Arg-165, Ser-191, Ile-247, 266 to 271 (ALTVSE), and Gln-292.

This sequence belongs to the glycosyltransferase 28 family. MurG subfamily.

The protein resides in the cell inner membrane. It catalyses the reaction di-trans,octa-cis-undecaprenyl diphospho-N-acetyl-alpha-D-muramoyl-L-alanyl-D-glutamyl-meso-2,6-diaminopimeloyl-D-alanyl-D-alanine + UDP-N-acetyl-alpha-D-glucosamine = di-trans,octa-cis-undecaprenyl diphospho-[N-acetyl-alpha-D-glucosaminyl-(1-&gt;4)]-N-acetyl-alpha-D-muramoyl-L-alanyl-D-glutamyl-meso-2,6-diaminopimeloyl-D-alanyl-D-alanine + UDP + H(+). It participates in cell wall biogenesis; peptidoglycan biosynthesis. In terms of biological role, cell wall formation. Catalyzes the transfer of a GlcNAc subunit on undecaprenyl-pyrophosphoryl-MurNAc-pentapeptide (lipid intermediate I) to form undecaprenyl-pyrophosphoryl-MurNAc-(pentapeptide)GlcNAc (lipid intermediate II). This chain is UDP-N-acetylglucosamine--N-acetylmuramyl-(pentapeptide) pyrophosphoryl-undecaprenol N-acetylglucosamine transferase, found in Shewanella baltica (strain OS223).